The sequence spans 186 residues: Alkyl hydroperoxide reductase AhpD (186 aa).

The active-site Proton donor is cysteine 132. A disulfide bridge links cysteine 132 with cysteine 135. Cysteine 135 (cysteine sulfenic acid (-SOH) intermediate) is an active-site residue.

This sequence belongs to the AhpD family.

It carries out the reaction N(6)-[(R)-dihydrolipoyl]-L-lysyl-[lipoyl-carrier protein] + a hydroperoxide = N(6)-[(R)-lipoyl]-L-lysyl-[lipoyl-carrier protein] + an alcohol + H2O. Its function is as follows. Antioxidant protein with alkyl hydroperoxidase activity. Required for the reduction of the AhpC active site cysteine residues and for the regeneration of the AhpC enzyme activity. The protein is Alkyl hydroperoxide reductase AhpD of Anaeromyxobacter sp. (strain K).